Reading from the N-terminus, the 282-residue chain is Bifunctional protein FolD (282 aa).

NADP(+) contacts are provided by residues 164-166 (GAS), isoleucine 189, and isoleucine 230.

Belongs to the tetrahydrofolate dehydrogenase/cyclohydrolase family. As to quaternary structure, homodimer.

It catalyses the reaction (6R)-5,10-methylene-5,6,7,8-tetrahydrofolate + NADP(+) = (6R)-5,10-methenyltetrahydrofolate + NADPH. It carries out the reaction (6R)-5,10-methenyltetrahydrofolate + H2O = (6R)-10-formyltetrahydrofolate + H(+). Its pathway is one-carbon metabolism; tetrahydrofolate interconversion. Its function is as follows. Catalyzes the oxidation of 5,10-methylenetetrahydrofolate to 5,10-methenyltetrahydrofolate and then the hydrolysis of 5,10-methenyltetrahydrofolate to 10-formyltetrahydrofolate. This chain is Bifunctional protein FolD, found in Campylobacter jejuni (strain RM1221).